Consider the following 689-residue polypeptide: DNA ligase (689 aa).

NAD(+) is bound by residues 35-39 (DEVYD), 84-85 (SL), and glutamate 122. The N6-AMP-lysine intermediate role is filled by lysine 124. Positions 145, 182, 308, and 332 each coordinate NAD(+). Zn(2+) contacts are provided by cysteine 426, cysteine 429, cysteine 444, and cysteine 449. The region spanning 612–689 (TTEKSLNGKR…NETELIQMCR (78 aa)) is the BRCT domain.

Belongs to the NAD-dependent DNA ligase family. LigA subfamily. Mg(2+) is required as a cofactor. Mn(2+) serves as cofactor.

It catalyses the reaction NAD(+) + (deoxyribonucleotide)n-3'-hydroxyl + 5'-phospho-(deoxyribonucleotide)m = (deoxyribonucleotide)n+m + AMP + beta-nicotinamide D-nucleotide.. Its function is as follows. DNA ligase that catalyzes the formation of phosphodiester linkages between 5'-phosphoryl and 3'-hydroxyl groups in double-stranded DNA using NAD as a coenzyme and as the energy source for the reaction. It is essential for DNA replication and repair of damaged DNA. This chain is DNA ligase, found in Thermosynechococcus vestitus (strain NIES-2133 / IAM M-273 / BP-1).